A 488-amino-acid polypeptide reads, in one-letter code: Dipeptide and tripeptide permease B (488 aa).

At 1–27 the chain is on the cytoplasmic side; that stretch reads MSKTASVGLWDQPKPFFMIFFVELWER. The helical transmembrane segment at 28-48 threads the bilayer; sequence FGFYGVQGILAIYFVQQLGFS. Topologically, residues 49–52 are periplasmic; it reads EEQS. Residues 53–73 traverse the membrane as a helical segment; the sequence is FITFGAFTALVYGLISVGGYV. Residues 74–82 are Cytoplasmic-facing; sequence GDHILGTKR. A helical transmembrane segment spans residues 83-103; the sequence is TIVLGAIVMAIGYYMIGLSIM. At 104 to 106 the chain is on the periplasmic side; that stretch reads KPE. The chain crosses the membrane as a helical span at residues 107 to 127; it reads LIFYALGTVAVGNGLFKANPA. The Cytoplasmic segment spans residues 128-146; it reads SLLAKCYQPQDPRLDGAFT. A helical membrane pass occupies residues 147 to 167; that stretch reads LFYMSINLGSLFSLSLAPVIA. Residues 168-172 lie on the Periplasmic side of the membrane; sequence EKYGY. A helical transmembrane segment spans residues 173-193; it reads TVTYNICGIGLIIALLVYIAC. Residues 194-211 lie on the Cytoplasmic side of the membrane; it reads RRMVHNIGSAPDHHPVKP. A helical membrane pass occupies residues 212 to 232; sequence IGLIAVLIGSVVMVGVCAWLL. Residues 233–234 lie on the Periplasmic side of the membrane; sequence HN. Residues 235-255 traverse the membrane as a helical segment; the sequence is IKVANIALFAITTIVVLIFFW. The Cytoplasmic segment spans residues 256-267; that stretch reads QAFKQNRVGRNK. The chain crosses the membrane as a helical span at residues 268 to 288; that stretch reads MFVAFILMLQAVVFFILYNQM. The Periplasmic portion of the chain corresponds to 289 to 311; that stretch reads PMSLNFFAINNVHHQILGFDVNP. The helical transmembrane segment at 312-332 threads the bilayer; it reads VSFQAFNPFWIIIVSPILAVV. Over 333–348 the chain is Cytoplasmic; that stretch reads YTKLGAKGKDFSMPAK. The helical transmembrane segment at 349–369 threads the bilayer; it reads FTFGMFLCSLGFLTAAASGLF. Residues 370 to 378 are Periplasmic-facing; it reads ADAQGITSP. A helical transmembrane segment spans residues 379 to 399; it reads WFIVLVYLFQSVGELMISALG. At 400–423 the chain is on the cytoplasmic side; the sequence is LAMVAAFVPSYLTGFILGMWFLSQ. The helical transmembrane segment at 424 to 444 threads the bilayer; the sequence is AVASMLASHVAALTATPVGVT. The Periplasmic segment spans residues 445 to 455; the sequence is DPLQTLPIYMS. Residues 456-476 form a helical membrane-spanning segment; it reads VFGKIGVATLIVAIIMTFMVP. Residues 477 to 488 are Cytoplasmic-facing; sequence WLNRIMREEVKA.

The protein belongs to the major facilitator superfamily. Proton-dependent oligopeptide transporter (POT/PTR) (TC 2.A.17) family. DtpB subfamily.

The protein resides in the cell inner membrane. Its function is as follows. Proton-dependent permease that transports di- and tripeptides. The sequence is that of Dipeptide and tripeptide permease B from Xenorhabdus bovienii (strain SS-2004) (Xenorhabdus nematophila subsp. bovienii).